The sequence spans 440 residues: MKTRDEKITVSDGLERLPEPALKSDERKMARQKIYALLEDRDATLTFEEDDPLEQTMVLNMGPQHPATHGVLRVVLKLDGERVVHAVPELGYLHRAMEKLAENKSYHEFMPYTDRLDYMSPYSNNTALCLAVEKLAEIEVPERATYIRTIACELARISSHLLSIGALVMDTGALSVFLWTFQEREKIYDIFDLLTGARFTISHCRVGGIASDLSKECAELIIRWLKQFKPKIQEWRKLLDRNRIFIERLEGVGVISKEDAIAIGLSGPNLRASGVHYDIRRDEPYLAYNDLDFEIPTFENGDSYARYQMRMLEMEESVKIIEQALRKLPKGEVRNEDAKKTFPWKDEIYHSMESLIHDFMMTDSGIQMPKGEIYHAIEAPKGELGFYIQSRGEGVPWRLKIRSPSFCNLQALPKLVEGGMIADVVIIIGSLDPVMGEADK.

The protein belongs to the complex I 49 kDa subunit family. As to quaternary structure, NDH-1 is composed of 14 different subunits. Subunits NuoB, C, D, E, F, and G constitute the peripheral sector of the complex.

The protein resides in the cell inner membrane. It carries out the reaction a quinone + NADH + 5 H(+)(in) = a quinol + NAD(+) + 4 H(+)(out). NDH-1 shuttles electrons from NADH, via FMN and iron-sulfur (Fe-S) centers, to quinones in the respiratory chain. The immediate electron acceptor for the enzyme in this species is believed to be a menaquinone. Couples the redox reaction to proton translocation (for every two electrons transferred, four hydrogen ions are translocated across the cytoplasmic membrane), and thus conserves the redox energy in a proton gradient. The protein is NADH-quinone oxidoreductase subunit D 1 of Chloroherpeton thalassium (strain ATCC 35110 / GB-78).